A 586-amino-acid chain; its full sequence is Retron Ec67 protein (586 aa).

The Reverse transcriptase domain maps to 29-262 (FLTNVLYRIG…SRQEVTGLTV (234 aa)). Asp-120, Asp-201, and Asp-202 together coordinate Mg(2+).

It belongs to the bacterial reverse transcriptase family.

It carries out the reaction DNA(n) + a 2'-deoxyribonucleoside 5'-triphosphate = DNA(n+1) + diphosphate. It catalyses the reaction Endonucleolytic cleavage to 5'-phosphomonoester.. Reverse transcriptase (RT) component of antiviral defense system retron Ec67, minimally composed of a non-coding RNA (ncRNA) and this RT. Expression of these 2 elements confers protection against bacteriophage T5. At multiplicity of infection (MOI) of 0.02 cultures grow normally when infected with T5 without collapsing, at MOI 2 cultures enter growth stasis. Responsible for synthesis of msDNA-Ec67 (a branched molecule with RNA linked by a 2',5'-phosphodiester bond to ssDNA). The retron transcript serves as primer (from a conserved internal G residue) and template for the reaction, and codes for the RT. Can use other retrons as substrate (msDNA-Mx162 and msDNA-Ec86). Also able to synthesize DNA from a DNA template at least in vitro, although the enzyme is less active with a DNA template. This Escherichia coli protein is Retron Ec67 protein.